A 341-amino-acid polypeptide reads, in one-letter code: MIELNQVVKRYHTKDKDVLAVDNVNLNIETGSIFGVIGFSGAGKSTLIRMFNNLEEPTSGDIIIDGDNINKLSKAELRRKRQKVSMVFQHFNLLWSRTVLRNITFPLEIAGYSKTKANERAKELIDLVGLNGRENAYPSELSGGQKQRVGIARALANEPDVLLCDEATSALDPQTTDEILDLLLKIKERENLTIVIITHEMHVIRRVCDEVAVMESGRVIEQGKVTQVFENPQHEVTRRFVKDDLDDDFEESIKHLEPLDSDAYIVRLNFNGGNTTEPVVSYISKTHNIDINILEANIKNTRGGSVGFLVVHIPHIAETEFETFKEDLHQQHVNVEVVKHG.

Positions 2–241 (IELNQVVKRY…PQHEVTRRFV (240 aa)) constitute an ABC transporter domain. Residue 38 to 45 (GFSGAGKS) coordinates ATP.

It belongs to the ABC transporter superfamily. Methionine importer (TC 3.A.1.24) family. The complex is composed of two ATP-binding proteins (MetN), two transmembrane proteins (MetI) and a solute-binding protein (MetQ).

The protein resides in the cell membrane. It catalyses the reaction L-methionine(out) + ATP + H2O = L-methionine(in) + ADP + phosphate + H(+). The catalysed reaction is D-methionine(out) + ATP + H2O = D-methionine(in) + ADP + phosphate + H(+). Functionally, part of the ABC transporter complex MetNIQ involved in methionine import. Responsible for energy coupling to the transport system. This Staphylococcus haemolyticus (strain JCSC1435) protein is Methionine import ATP-binding protein MetN.